The sequence spans 686 residues: Homoaconitase, mitochondrial (686 aa).

The transit peptide at 1–17 (MRVVRCVRRFSASRAVS) directs the protein to the mitochondrion. Residues Cys-337, Cys-401, and Cys-404 each contribute to the [4Fe-4S] cluster site.

The protein belongs to the aconitase/IPM isomerase family. [4Fe-4S] cluster serves as cofactor.

It localises to the mitochondrion. It catalyses the reaction (2R,3S)-homoisocitrate = cis-homoaconitate + H2O. It functions in the pathway amino-acid biosynthesis; L-lysine biosynthesis via AAA pathway; L-alpha-aminoadipate from 2-oxoglutarate: step 3/5. Functionally, catalyzes the reversible hydration of cis-homoaconitate to (2R,3S)-homoisocitrate, a step in the alpha-aminoadipate pathway for lysine biosynthesis. This Eremothecium gossypii (strain ATCC 10895 / CBS 109.51 / FGSC 9923 / NRRL Y-1056) (Yeast) protein is Homoaconitase, mitochondrial (LYS4).